A 154-amino-acid polypeptide reads, in one-letter code: MNKKYLRDLMNNDLSPLIKDTGIEFYDVEYSNNNGKNILTFYIEKDDGLISIDDCELINNKISDKLDEIDPISDPYYLEIASVDITTPFTRDKDFKKNLGNVVIVNLYQKLDSKKEFKGILTDFNDTEISLELEKKEIKIERSNISSIKLSLFD.

It belongs to the RimP family.

Its subcellular location is the cytoplasm. In terms of biological role, required for maturation of 30S ribosomal subunits. The sequence is that of Ribosome maturation factor RimP from Finegoldia magna (strain ATCC 29328 / DSM 20472 / WAL 2508) (Peptostreptococcus magnus).